The following is a 234-amino-acid chain: AGEDHGRGPYVQADLAYAYEHITHDYPEQTGTKKDKISTVSDYFRNIRTHSIHPRVSVGYDFGGWRIAADYARYRKWNDNKYSVDIKELENKNQNKRDLKTENQENGTFHAVSSLGLSAVYDFKLNDKFKPYIGARVAYGHVRHSIDSTKKTTKFLTSSYGGLNPTVYTEENTQNAHHQSNSIRRVGLGVIAGVGFDITPKLTLDTGYRYHYWGRLENTRFKTHEASLGVRYRF.

Ala1 is a signal peptide.

Belongs to the opacity porin family.

It is found in the cell outer membrane. Its function is as follows. Implicated in a number of adherence functions. OPA proteins are implicated in pathogenesis and are subject to phase variation. This chain is Opacity protein opA55 (opaE), found in Neisseria gonorrhoeae.